The sequence spans 122 residues: Large ribosomal subunit protein bL17 (122 aa).

This sequence belongs to the bacterial ribosomal protein bL17 family. Part of the 50S ribosomal subunit. Contacts protein L32.

The protein is Large ribosomal subunit protein bL17 of Wigglesworthia glossinidia brevipalpis.